The following is a 187-amino-acid chain: Putative manganese efflux pump MntP (187 aa).

6 helical membrane passes run 3 to 23 (FYSL…VSLC), 35 to 55 (HYLI…TIGY), 56 to 76 (FIGI…AFIL), 107 to 127 (LALA…FAFL), 129 to 149 (VNLL…CIIA), and 166 to 186 (LLGG…HLFF).

The protein belongs to the MntP (TC 9.B.29) family.

Its subcellular location is the cell inner membrane. Probably functions as a manganese efflux pump. The protein is Putative manganese efflux pump MntP of Campylobacter jejuni (strain RM1221).